A 465-amino-acid chain; its full sequence is Clusterin-like protein 1 (465 aa).

A signal peptide spans 1-20 (MKPPILVFIVYLLQLRDCQC). Residues 62–107 (LMERREEEHSKLMRTLKKCREEKQEALKLMNEVQEHLEEEERLCQV) adopt a coiled-coil conformation. Disulfide bonds link cysteine 105/cysteine 333, cysteine 116/cysteine 325, cysteine 119/cysteine 322, cysteine 124/cysteine 315, and cysteine 131/cysteine 305. N-linked (GlcNAc...) asparagine glycans are attached at residues asparagine 196 and asparagine 257. The tract at residues 280-300 (LSKQDKDSAHGGPSSTTWPVR) is disordered. N-linked (GlcNAc...) asparagine glycans are attached at residues asparagine 311, asparagine 351, asparagine 412, and asparagine 430.

The protein belongs to the clusterin family.

It is found in the secreted. The sequence is that of Clusterin-like protein 1 from Bos taurus (Bovine).